The primary structure comprises 223 residues: uncharacterized protein (223 aa).

A C4-type zinc finger spans residues 33 to 67 (CPICGGKGTLKAIQFIHRIPYFGEVMESTVVCERC).

Belongs to the ZPR1 family.

This is an uncharacterized protein from Pyrococcus horikoshii (strain ATCC 700860 / DSM 12428 / JCM 9974 / NBRC 100139 / OT-3).